Consider the following 61-residue polypeptide: Transcription elongation factor Spt4 (61 aa).

Zn(2+) contacts are provided by Cys-6, Cys-9, Cys-18, and Cys-21.

It belongs to the archaeal Spt4 family. In terms of assembly, heterodimer composed of Spt4 and Spt5.

Functionally, stimulates transcription elongation. The sequence is that of Transcription elongation factor Spt4 from Pyrococcus furiosus (strain ATCC 43587 / DSM 3638 / JCM 8422 / Vc1).